The following is a 295-amino-acid chain: tRNA-cytidine(32) 2-sulfurtransferase (295 aa).

The PP-loop motif signature appears at 63–68 (SGGKDS). Positions 138, 141, and 229 each coordinate [4Fe-4S] cluster.

It belongs to the TtcA family. As to quaternary structure, homodimer. Mg(2+) serves as cofactor. The cofactor is [4Fe-4S] cluster.

The protein resides in the cytoplasm. It carries out the reaction cytidine(32) in tRNA + S-sulfanyl-L-cysteinyl-[cysteine desulfurase] + AH2 + ATP = 2-thiocytidine(32) in tRNA + L-cysteinyl-[cysteine desulfurase] + A + AMP + diphosphate + H(+). Its pathway is tRNA modification. Its function is as follows. Catalyzes the ATP-dependent 2-thiolation of cytidine in position 32 of tRNA, to form 2-thiocytidine (s(2)C32). The sulfur atoms are provided by the cysteine/cysteine desulfurase (IscS) system. This chain is tRNA-cytidine(32) 2-sulfurtransferase, found in Hyphomonas neptunium (strain ATCC 15444).